Here is a 703-residue protein sequence, read N- to C-terminus: WPP domain-interacting tail-anchored protein 1 (703 aa).

Residues 1–12 (METETEHDRTVS) show a composition bias toward basic and acidic residues. Disordered regions lie at residues 1–27 (METETEHDRTVSVDDNDSLVPEPSSTK) and 86–107 (FVSKKEEDEEEPSSNVDDDDDS). Acidic residues predominate over residues 92 to 107 (EDEEEPSSNVDDDDDS). Residues 118–183 (SSILNSEVKE…MEQVVEMKKQ (66 aa)) are a coiled coil. Residues 189-208 (RLSSGLDEQGSWSGGQTSVS) are disordered. The segment covering 198–208 (GSWSGGQTSVS) has biased composition (polar residues). Coiled coils occupy residues 236 to 265 (LEKSLAKEMELEKKLSESRNTERELEMKLY), 318 to 461 (KRED…RDKG), and 500 to 604 (STVS…SREN). Residues 679-699 (FKHILVAILVILISSIAYVIS) traverse the membrane as a helical segment.

In terms of assembly, homodimer. Component of Ran complexes at least composed of WIT1 or WIT2, RANGAP1 or RANGAP2, and WIP1 or WIP2 or WIP3. Interacts with WIP2, WPP1/MAF1, WPP2/MAF2, RANGAP1 and RANGAP2. Component of a ternary complex composed of WPP1, HSP70-1 and WIT1. Interacts with KAKU1. Interacts with WIP1. Ubiquitous.

The protein localises to the nucleus envelope. The protein resides in the nucleus membrane. Together with WIT2, required for the nuclear envelope docking of RANGAP proteins in root tips. The polypeptide is WPP domain-interacting tail-anchored protein 1 (WIT1) (Arabidopsis thaliana (Mouse-ear cress)).